Consider the following 56-residue polypeptide: MAVQKNKKSRSKRGMRRSHDSLSTPQLSVDSTSGELHLRHNVTADGFYRGQKVINK.

The span at 1 to 16 (MAVQKNKKSRSKRGMR) shows a compositional bias: basic residues. The interval 1-36 (MAVQKNKKSRSKRGMRRSHDSLSTPQLSVDSTSGEL) is disordered. The segment covering 21–34 (SLSTPQLSVDSTSG) has biased composition (polar residues).

This sequence belongs to the bacterial ribosomal protein bL32 family.

The sequence is that of Large ribosomal subunit protein bL32 from Shewanella sediminis (strain HAW-EB3).